The sequence spans 573 residues: Phosphoenolpyruvate-protein phosphotransferase (573 aa).

The Tele-phosphohistidine intermediate role is filled by H190. Residues R297 and R332 each contribute to the phosphoenolpyruvate site. Residues E431 and D455 each contribute to the Mg(2+) site. Phosphoenolpyruvate contacts are provided by residues 454-455 and R465; that span reads ND. The Proton donor role is filled by C502.

It belongs to the PEP-utilizing enzyme family. Homodimer. The cofactor is Mg(2+).

Its subcellular location is the cytoplasm. The enzyme catalyses L-histidyl-[protein] + phosphoenolpyruvate = N(pros)-phospho-L-histidyl-[protein] + pyruvate. Irreversibly inhibited the sulfhydryl reagent N-ethylmaleimide (NEM). Its function is as follows. General (non sugar-specific) component of the phosphoenolpyruvate-dependent sugar phosphotransferase system (sugar PTS). This major carbohydrate active-transport system catalyzes the phosphorylation of incoming sugar substrates concomitantly with their translocation across the cell membrane. Enzyme I transfers the phosphoryl group from phosphoenolpyruvate (PEP) to the phosphoryl carrier protein (HPr). This is Phosphoenolpyruvate-protein phosphotransferase (ptsI) from Mycoplasma capricolum subsp. capricolum (strain California kid / ATCC 27343 / NCTC 10154).